The sequence spans 656 residues: F-box/LRR-repeat protein 10 (656 aa).

Positions E20 to N66 constitute an F-box domain. 16 LRR repeats span residues N71–C96, C120–S145, G151–F176, S194–G221, V243–D268, V277–R301, F310–G335, F336–H361, G362–R387, C388–G412, C413–G437, D439–G463, C464–N491, L492–E517, C518–D551, and C552–G578. The interval I632–D656 is disordered.

This is F-box/LRR-repeat protein 10 (FBL10) from Arabidopsis thaliana (Mouse-ear cress).